The following is a 237-amino-acid chain: Small ribosomal subunit protein eS4 (237 aa).

An S4 RNA-binding domain is found at 37–99 (VPLLIVLRDV…REEYYRIFPD (63 aa)).

This sequence belongs to the eukaryotic ribosomal protein eS4 family.

The polypeptide is Small ribosomal subunit protein eS4 (Natronomonas pharaonis (strain ATCC 35678 / DSM 2160 / CIP 103997 / JCM 8858 / NBRC 14720 / NCIMB 2260 / Gabara) (Halobacterium pharaonis)).